The chain runs to 338 residues: 4'-phosphopantetheinyl transferase (338 aa).

This sequence belongs to the P-Pant transferase superfamily.

The enzyme catalyses apo-[ACP] + CoA = holo-[ACP] + adenosine 3',5'-bisphosphate + H(+). Acyl-carrier-protein synthase that transfers the 4'-phosphopantetheine moiety from coenzyme A to a Ser of an acyl-carrier-protein. The 4'-phosphopantetheine (4'-PPT) portion of CoA provides the essential prosthetic group for a number of carrier proteins and multi-domain enzymes, priming them for the acceptance of acyl building blocks in fatty acid synthesis and many aspects of secondary metabolism mediated by polyketide synthases (PKSs) and non-ribosomal peptide synthetases (NRPSs). Plays a key role in liamocins biosynthesis by activationg the HR-PKS PKS1 that produces 3,5-dihydroxydecanoic acid, a precursor of liamocins. This Aureobasidium melanogenum (Aureobasidium pullulans var. melanogenum) protein is 4'-phosphopantetheinyl transferase.